We begin with the raw amino-acid sequence, 544 residues long: CTP synthase (544 aa).

Residues 1-267 form an amidoligase domain region; that stretch reads MSKFVFVTGG…GDLLVSRLHL (267 aa). Ser13 contacts CTP. Ser13 is a UTP binding site. 14–19 provides a ligand contact to ATP; that stretch reads SVGKGI. Residue Tyr54 participates in L-glutamine binding. Asp71 contacts ATP. 2 residues coordinate Mg(2+): Asp71 and Glu141. CTP-binding positions include 148 to 150, 188 to 193, and Lys224; these read DIE and KTKPTQ. Residues 188–193 and Lys224 each bind UTP; that span reads KTKPTQ. In terms of domain architecture, Glutamine amidotransferase type-1 spans 299–534; the sequence is YVELKDAYYS…INAAKKVIRD (236 aa). Gly354 contacts L-glutamine. Catalysis depends on Cys381, which acts as the Nucleophile; for glutamine hydrolysis. Residues 382–385, Glu405, and Arg462 each bind L-glutamine; that span reads LGMQ. Active-site residues include His507 and Glu509.

It belongs to the CTP synthase family. Homotetramer.

The enzyme catalyses UTP + L-glutamine + ATP + H2O = CTP + L-glutamate + ADP + phosphate + 2 H(+). The catalysed reaction is L-glutamine + H2O = L-glutamate + NH4(+). It catalyses the reaction UTP + NH4(+) + ATP = CTP + ADP + phosphate + 2 H(+). It functions in the pathway pyrimidine metabolism; CTP biosynthesis via de novo pathway; CTP from UDP: step 2/2. With respect to regulation, allosterically activated by GTP, when glutamine is the substrate; GTP has no effect on the reaction when ammonia is the substrate. The allosteric effector GTP functions by stabilizing the protein conformation that binds the tetrahedral intermediate(s) formed during glutamine hydrolysis. Inhibited by the product CTP, via allosteric rather than competitive inhibition. Catalyzes the ATP-dependent amination of UTP to CTP with either L-glutamine or ammonia as the source of nitrogen. Regulates intracellular CTP levels through interactions with the four ribonucleotide triphosphates. This Dehalococcoides mccartyi (strain ATCC BAA-2266 / KCTC 15142 / 195) (Dehalococcoides ethenogenes (strain 195)) protein is CTP synthase.